The primary structure comprises 293 residues: MLMISILYSLFPPLLFPSLLAAFGASIAGGIVGSYIVVKRIVSISGSIAHSILGGVGIALWLQYQFDLPISPLHGAIASAIFVAICIGNVHLKYHEREDSIISMIWSIGMAVGMLCISKLPSFNSDLADFLFGNILWVTSRDLYFLGILDLLIVATVSICHTRFLALCFDEKYMALNRYSIKAWYFLLLILTAITTVVLMYVMGVILMLSMLVLPVSIACRFSYKMSSIIFTASILNICCSFLGIILAYILDLPVGPIIAILMGIAYSLSLLLKRSCNTSTPSPVSPESKINS.

Helical transmembrane passes span Ser18–Val38, Ile41–Trp61, Leu68–Gly88, Ile101–Pro121, Asp142–Thr162, Phe186–Ile206, and Phe242–Leu262.

Belongs to the ABC-3 integral membrane protein family.

It is found in the cell inner membrane. Functionally, part of an ATP-driven transport system TC_0696/TC_0697/TC_0698 for a metal. This is Probable metal transport system membrane protein TC_0698 from Chlamydia muridarum (strain MoPn / Nigg).